A 72-amino-acid polypeptide reads, in one-letter code: Small ribosomal subunit protein bS20 (72 aa).

Belongs to the bacterial ribosomal protein bS20 family.

Its function is as follows. Binds directly to 16S ribosomal RNA. The sequence is that of Small ribosomal subunit protein bS20 (rpsT) from Proteus mirabilis.